Consider the following 298-residue polypeptide: MPDYEFSPASGDRPRSWISKQVLIVLGVCLPVILALAIWVGVLTWRQSSMGATDHVSAIVLGRCLTYTRNMHPELRNQDCKKILNTFTSAFVSKDPCNITKEDYQPLIDLVTQTVPCNKTLFWSRSKELAHQYSGIQKEMFTLEDTLLGYIADNLVWCGDPRTSEVKEEFCPYRNENCSSTATSVFWTVVSQKFAESACGTVYVMLNGSRTTAFSKASTFGSVEVFNLHPDRVHTLHAWVMHDIGGVERDSCLGSSIKELKSIVNQRNISFFCQDDYRPARFVQCVRHPEHPSCSVLM.

Residues 1-21 (MPDYEFSPASGDRPRSWISKQ) are Cytoplasmic-facing. The helical; Signal-anchor for type II membrane protein transmembrane segment at 22 to 42 (VLIVLGVCLPVILALAIWVGV) threads the bilayer. The Extracellular portion of the chain corresponds to 43–298 (LTWRQSSMGA…PEHPSCSVLM (256 aa)). Cystine bridges form between Cys64/Cys80, Cys97/Cys178, and Cys158/Cys171. Residue Asn98 is glycosylated (N-linked (GlcNAc...) asparagine). Residue Cys117 is part of the active site. A glycan (N-linked (GlcNAc...) asparagine) is linked at Asn118. N-linked (GlcNAc...) asparagine glycosylation occurs at Asn177. Cys199 is a catalytic residue. N-linked (GlcNAc...) asparagine glycans are attached at residues Asn207 and Asn268. Disulfide bonds link Cys252-Cys273 and Cys285-Cys294.

Belongs to the ADP-ribosyl cyclase family. Homodimer. As to expression, osteoclasts.

It localises to the cell membrane. It is found in the microsome membrane. Its subcellular location is the endoplasmic reticulum membrane. It carries out the reaction NAD(+) = cyclic ADP-beta-D-ribose + nicotinamide + H(+). The enzyme catalyses 2'-phospho-cyclic ADP-ribose + nicotinate = nicotinate-adenine dinucleotide phosphate. It catalyses the reaction NAD(+) + H2O = ADP-D-ribose + nicotinamide + H(+). The catalysed reaction is nicotinate + NADP(+) = nicotinate-adenine dinucleotide phosphate + nicotinamide. Its function is as follows. Synthesizes cyclic ADP-ribose (cADPR), a second messenger for glucose-induced insulin secretion. Synthesizes the Ca(2+) mobilizer nicotinate-adenine dinucleotide phosphate, NAADP(+), from 2'-phospho-cADPR and nicotinic acid, as well as from NADP(+) and nicotinic acid. Also has cADPR hydrolase activity. In Oryctolagus cuniculus (Rabbit), this protein is ADP-ribosyl cyclase/cyclic ADP-ribose hydrolase 1 (CD38).